A 280-amino-acid polypeptide reads, in one-letter code: Large ribosomal subunit protein uL2 (280 aa).

Disordered stretches follow at residues 33 to 55 (LTEG…RRRG) and 224 to 266 (AMNP…KASQ). The span at 256–266 (TRTRNKNKASQ) shows a compositional bias: basic residues.

The protein belongs to the universal ribosomal protein uL2 family. In terms of assembly, part of the 50S ribosomal subunit. Forms a bridge to the 30S subunit in the 70S ribosome.

In terms of biological role, one of the primary rRNA binding proteins. Required for association of the 30S and 50S subunits to form the 70S ribosome, for tRNA binding and peptide bond formation. It has been suggested to have peptidyltransferase activity; this is somewhat controversial. Makes several contacts with the 16S rRNA in the 70S ribosome. This is Large ribosomal subunit protein uL2 from Ruegeria pomeroyi (strain ATCC 700808 / DSM 15171 / DSS-3) (Silicibacter pomeroyi).